A 285-amino-acid polypeptide reads, in one-letter code: E2F-associated phosphoprotein (285 aa).

Position 1 is an N-acetylmethionine (methionine 1). Residues 1–30 (MNRLPDDYDPYAVEEPSDEEPALSSSEDEV) are disordered. Acidic residues predominate over residues 15-30 (EPSDEEPALSSSEDEV). The residue at position 17 (serine 17) is a Phosphoserine. At threonine 37 the chain carries Phosphothreonine. The interval 48–96 (CLTGESESSSEDEFEKEMEAELNSTMKTMEDKLSSLGTGSSSGNGKVAT) is disordered. The segment covering 55–67 (SSSEDEFEKEMEA) has biased composition (acidic residues). The span at 81–92 (SSLGTGSSSGNG) shows a compositional bias: low complexity. Phosphoserine occurs at positions 109 and 111. Residues 118-144 (VQVTKKKKKKQHKIPTNDELLYDPEKD) form a disordered region. Residues 121–130 (TKKKKKKQHK) show a composition bias toward basic residues.

As to quaternary structure, interacts with E2F1. The C-terminal half binds the N-terminal of E2F1. Also interacts with E2F2 and E2F3, but not E2F4. In terms of tissue distribution, ubiquitously expressed. Highest levels in heart, placenta, skeletal muscle and pancreas. Lower levels in brain, lung and kidney. In the brain, expressed in all regions with high levels in the cerebellum and cerebral cortex. Expressed in COS1 and transformed skin fibroblasts.

It is found in the cytoplasm. The protein localises to the nucleus. Its function is as follows. May play an important role in the fine-tuning of both major E2F1 activities, the regulation of the cell-cycle and the induction of apoptosis. Promotes S-phase entry, and inhibits p14(ARP) expression. In Homo sapiens (Human), this protein is E2F-associated phosphoprotein (EAPP).